Here is a 2294-residue protein sequence, read N- to C-terminus: Protein Ycf2 (2294 aa).

1635 to 1642 contributes to the ATP binding site; it reads GSIGTGRS.

The protein belongs to the Ycf2 family.

Its subcellular location is the plastid. The protein localises to the chloroplast stroma. Its function is as follows. Probable ATPase of unknown function. Its presence in a non-photosynthetic plant (Epifagus virginiana) and experiments in tobacco indicate that it has an essential function which is probably not related to photosynthesis. In Ranunculus macranthus (Large buttercup), this protein is Protein Ycf2.